The sequence spans 153 residues: Endoribonuclease YbeY (153 aa).

Residues histidine 116, histidine 120, and histidine 126 each contribute to the Zn(2+) site.

This sequence belongs to the endoribonuclease YbeY family. It depends on Zn(2+) as a cofactor.

The protein resides in the cytoplasm. Functionally, single strand-specific metallo-endoribonuclease involved in late-stage 70S ribosome quality control and in maturation of the 3' terminus of the 16S rRNA. In Paraburkholderia phytofirmans (strain DSM 17436 / LMG 22146 / PsJN) (Burkholderia phytofirmans), this protein is Endoribonuclease YbeY.